A 101-amino-acid polypeptide reads, in one-letter code: Large ribosomal subunit protein bL21 (101 aa).

It belongs to the bacterial ribosomal protein bL21 family. As to quaternary structure, part of the 50S ribosomal subunit. Contacts protein L20.

In terms of biological role, this protein binds to 23S rRNA in the presence of protein L20. The protein is Large ribosomal subunit protein bL21 of Corynebacterium efficiens (strain DSM 44549 / YS-314 / AJ 12310 / JCM 11189 / NBRC 100395).